A 211-amino-acid polypeptide reads, in one-letter code: MPVRIIDHVYAQYLLTRLRDKNTGSLDFRKGLVRLGRIIGYELVKTFPFRYVEVETPLGRAVGVDIIGLDKVVIVQILRAAMPLVEGLVKAFPNARLGVVAARRKEEEGYVDVEVFYSKMPSIGVEDTVIVADPMLATGTTMSKAIEEVYKTGTPGRLVVVSVIATPVGISRVLSRWPDTEIYTVAIDPELNDKAFIVPGLGDAGDRAFAT.

Position 30 to 34 (30 to 34) interacts with GTP; that stretch reads KGLVR. Residues R79, R104, and 133–141 each bind 5-phospho-alpha-D-ribose 1-diphosphate; that span reads DPMLATGTT. Uracil-binding positions include I197 and 202-204; that span reads GDA. Residue D203 coordinates 5-phospho-alpha-D-ribose 1-diphosphate.

Belongs to the UPRTase family. It depends on Mg(2+) as a cofactor.

It carries out the reaction UMP + diphosphate = 5-phospho-alpha-D-ribose 1-diphosphate + uracil. Its pathway is pyrimidine metabolism; UMP biosynthesis via salvage pathway; UMP from uracil: step 1/1. Its activity is regulated as follows. Allosterically activated by GTP. Functionally, catalyzes the conversion of uracil and 5-phospho-alpha-D-ribose 1-diphosphate (PRPP) to UMP and diphosphate. This is Uracil phosphoribosyltransferase from Pyrobaculum arsenaticum (strain DSM 13514 / JCM 11321 / PZ6).